The following is a 454-amino-acid chain: Glutamine synthetase (454 aa).

The 87-residue stretch at 25–111 (QGIDFLRLQF…LICDVVDREG (87 aa)) folds into the GS beta-grasp domain. In terms of domain architecture, GS catalytic spans 118–454 (PRQVLKNVLA…WETDRYLEKF (337 aa)). Mg(2+) contacts are provided by Glu141 and Glu143. Residue Glu193 participates in ATP binding. Mg(2+)-binding residues include Glu198 and Glu205. Residues 249–250 (NG) and Gly250 contribute to the L-glutamate site. His254 serves as a coordination point for Mg(2+). ATP is bound by residues 256-258 (HIS) and Ser258. Arg308, Glu314, and Arg326 together coordinate L-glutamate. ATP contacts are provided by Arg326 and Arg331. Residue Glu343 coordinates Mg(2+). Arg345 lines the L-glutamate pocket.

This sequence belongs to the glutamine synthetase family. As to quaternary structure, oligomer of 12 subunits arranged in the form of two hexagons. In its feedback-inhibited form, interacts with TnrA in order to block its DNA-binding activity. It depends on Mg(2+) as a cofactor.

The protein localises to the cytoplasm. It carries out the reaction L-glutamate + NH4(+) + ATP = L-glutamine + ADP + phosphate + H(+). Inhibited by glutamine. Glutamine synthetase (GS) is an unusual multitasking protein that functions as an enzyme, a transcription coregulator, and a chaperone in ammonium assimilation and in the regulation of genes involved in nitrogen metabolism. It catalyzes the ATP-dependent biosynthesis of glutamine from glutamate and ammonia. Feedback-inhibited GlnA also interacts with and regulates the activity of the transcriptional regulator TnrA. During nitrogen limitation, TnrA is in its DNA-binding active state and turns on the transcription of genes required for nitrogen assimilation. Under conditions of nitrogen excess, feedback-inhibited GlnA forms a stable complex with TnrA, which inhibits its DNA-binding activity. In contrast, feedback-inhibited GlnA acts as a chaperone to stabilize the DNA-binding activity of GlnR, which represses the transcription of nitrogen assimilation genes. The chain is Glutamine synthetase from Halobacterium salinarum (strain ATCC 700922 / JCM 11081 / NRC-1) (Halobacterium halobium).